The chain runs to 125 residues: uncharacterized protein (125 aa).

Residues 10-26 traverse the membrane as a helical segment; it reads IIILVCLMFLAIMVYIY.

The protein resides in the membrane. This is an uncharacterized protein from Rickettsia prowazekii (strain Madrid E).